A 1099-amino-acid polypeptide reads, in one-letter code: Carbamoyl phosphate synthase large chain (1099 aa).

The interval 1 to 402 (MPRREDIKRI…ALGKALRSLE (402 aa)) is carboxyphosphate synthetic domain. R129, R169, G175, G176, E208, V210, E215, G241, I242, H243, Q285, and E299 together coordinate ATP. In terms of domain architecture, ATP-grasp 1 spans 133–328 (KKTMEEAGLE…IAKIAALLAV (196 aa)). Residues Q285, E299, and N301 each contribute to the Mg(2+) site. Residues Q285, E299, and N301 each coordinate Mn(2+). The interval 403–541 (LDAAPKLDLD…STYNGVENEA (139 aa)) is oligomerization domain. The segment at 542 to 944 (IPTDKEKIMI…AFAKAEIAAG (403 aa)) is carbamoyl phosphate synthetic domain. The ATP-grasp 2 domain maps to 666–857 (AKLLKRIGLR…VAKIAAKIMV (192 aa)). 10 residues coordinate ATP: R702, K741, L743, E748, G773, V774, H775, S776, Q816, and E828. 3 residues coordinate Mg(2+): Q816, E828, and N830. Residues Q816, E828, and N830 each contribute to the Mn(2+) site. In terms of domain architecture, MGS-like spans 945–1099 (NPLPTEGAIL…VRKLTDTWKM (155 aa)). Positions 945–1099 (NPLPTEGAIL…VRKLTDTWKM (155 aa)) are allosteric domain.

This sequence belongs to the CarB family. Composed of two chains; the small (or glutamine) chain promotes the hydrolysis of glutamine to ammonia, which is used by the large (or ammonia) chain to synthesize carbamoyl phosphate. Tetramer of heterodimers (alpha,beta)4. Mg(2+) serves as cofactor. It depends on Mn(2+) as a cofactor.

It catalyses the reaction hydrogencarbonate + L-glutamine + 2 ATP + H2O = carbamoyl phosphate + L-glutamate + 2 ADP + phosphate + 2 H(+). The enzyme catalyses hydrogencarbonate + NH4(+) + 2 ATP = carbamoyl phosphate + 2 ADP + phosphate + 2 H(+). The protein operates within amino-acid biosynthesis; L-arginine biosynthesis; carbamoyl phosphate from bicarbonate: step 1/1. It functions in the pathway pyrimidine metabolism; UMP biosynthesis via de novo pathway; (S)-dihydroorotate from bicarbonate: step 1/3. In terms of biological role, large subunit of the glutamine-dependent carbamoyl phosphate synthetase (CPSase). CPSase catalyzes the formation of carbamoyl phosphate from the ammonia moiety of glutamine, carbonate, and phosphate donated by ATP, constituting the first step of 2 biosynthetic pathways, one leading to arginine and/or urea and the other to pyrimidine nucleotides. The large subunit (synthetase) binds the substrates ammonia (free or transferred from glutamine from the small subunit), hydrogencarbonate and ATP and carries out an ATP-coupled ligase reaction, activating hydrogencarbonate by forming carboxy phosphate which reacts with ammonia to form carbamoyl phosphate. The sequence is that of Carbamoyl phosphate synthase large chain from Thermotoga neapolitana (strain ATCC 49049 / DSM 4359 / NBRC 107923 / NS-E).